Consider the following 370-residue polypeptide: Flagellar P-ring protein (370 aa).

An N-terminal signal peptide occupies residues 1–28 (MTFFTRCFRRGALLFLLAVLLLPSPAQA).

This sequence belongs to the FlgI family. As to quaternary structure, the basal body constitutes a major portion of the flagellar organelle and consists of four rings (L,P,S, and M) mounted on a central rod.

Its subcellular location is the periplasm. It is found in the bacterial flagellum basal body. In terms of biological role, assembles around the rod to form the L-ring and probably protects the motor/basal body from shearing forces during rotation. This Oleidesulfovibrio alaskensis (strain ATCC BAA-1058 / DSM 17464 / G20) (Desulfovibrio alaskensis) protein is Flagellar P-ring protein.